The sequence spans 167 residues: Probable phospholipid hydroperoxide glutathione peroxidase (167 aa).

The active site involves C41.

This sequence belongs to the glutathione peroxidase family.

It localises to the cytoplasm. The catalysed reaction is a hydroperoxy polyunsaturated fatty acid + 2 glutathione = a hydroxy polyunsaturated fatty acid + glutathione disulfide + H2O. Its function is as follows. Protects cells and enzymes from oxidative damage, by catalyzing the reduction of hydrogen peroxide, lipid peroxides and organic hydroperoxide, by glutathione. The chain is Probable phospholipid hydroperoxide glutathione peroxidase (CSA) from Citrus sinensis (Sweet orange).